The sequence spans 420 residues: MRRRRSRVEGAARALPEAVAALSRCLPAGPSPEIFRRAKFDRPEAAPVLWQLLLRVLSPLAANNTWTDLAPEAQACVVKSALGSQGYPRSVLLQFPDGSSQGSRELLLALSWLLARGPLLEQLLAQTRVQLGDQLPQWEAPTSPGPPAPFVEPKSPVDLRLVEWLMGRLRFRWRCLISSQQEQCILLSKIHLYTQGCHSQQSLGHLSVAETEMLRDPESGQQLLQALESENIRLEAALEWRRRELVFWQWMDTVLDTCSPETPAVTSQPTFLPEISEGGLGELESVKQELQALQEELREVSEPRRAAWEARVGGLGQGPEWSNSRKALQEAVQQELAALQGSWEQSSTPGQPQRPHRLVRSKDGAPRPQGLQAAEVIRTLSAKEACLKKALHQLQRQCQQELARLAGALPGLIWILPPEH.

A coiled-coil region spans residues 276–340; it reads SEGGLGELES…AVQQELAALQ (65 aa). Positions 342–351 are enriched in polar residues; the sequence is SWEQSSTPGQ. Positions 342 to 369 are disordered; sequence SWEQSSTPGQPQRPHRLVRSKDGAPRPQ. Residues 377 to 409 are a coiled coil; that stretch reads IRTLSAKEACLKKALHQLQRQCQQELARLAGAL.

In terms of assembly, interacts with TEDC2. Found in a complex with TEDC1, TEDC2, TUBE1 and TUBD1.

It localises to the cell projection. The protein localises to the cilium. Its subcellular location is the cytoplasm. It is found in the cytoskeleton. The protein resides in the microtubule organizing center. It localises to the centrosome. The protein localises to the centriole. Functionally, acts as a positive regulator of ciliary hedgehog signaling. Required for centriole stability. May play a role in counteracting perturbation of actin filaments, such as after treatment with the actin depolymerizing microbial metabolite Chivosazole F. The sequence is that of Tubulin epsilon and delta complex protein 1 from Mus musculus (Mouse).